A 366-amino-acid chain; its full sequence is Phospho-N-acetylmuramoyl-pentapeptide-transferase (366 aa).

A run of 10 helical transmembrane segments spans residues 27-47, 71-91, 93-113, 134-154, 174-194, 205-225, 245-265, 268-288, 294-314, and 343-363; these read AALF…INSL, TPTM…LLWA, LSNV…AIGF, LGIE…TALA, FLIN…VGAG, GLAI…AYLA, LAVV…FNAP, AIFM…TVAV, IVMA…IIQV, and QVVI…LSTL.

The protein belongs to the glycosyltransferase 4 family. MraY subfamily. Requires Mg(2+) as cofactor.

The protein localises to the cell inner membrane. The catalysed reaction is UDP-N-acetyl-alpha-D-muramoyl-L-alanyl-gamma-D-glutamyl-meso-2,6-diaminopimeloyl-D-alanyl-D-alanine + di-trans,octa-cis-undecaprenyl phosphate = di-trans,octa-cis-undecaprenyl diphospho-N-acetyl-alpha-D-muramoyl-L-alanyl-D-glutamyl-meso-2,6-diaminopimeloyl-D-alanyl-D-alanine + UMP. It participates in cell wall biogenesis; peptidoglycan biosynthesis. Functionally, catalyzes the initial step of the lipid cycle reactions in the biosynthesis of the cell wall peptidoglycan: transfers peptidoglycan precursor phospho-MurNAc-pentapeptide from UDP-MurNAc-pentapeptide onto the lipid carrier undecaprenyl phosphate, yielding undecaprenyl-pyrophosphoryl-MurNAc-pentapeptide, known as lipid I. This Rhizobium etli (strain ATCC 51251 / DSM 11541 / JCM 21823 / NBRC 15573 / CFN 42) protein is Phospho-N-acetylmuramoyl-pentapeptide-transferase.